A 409-amino-acid chain; its full sequence is N-acetylglucosamine-6-phosphate deacetylase (409 aa).

E143 provides a ligand contact to a divalent metal cation. 154 to 155 contacts substrate; the sequence is AH. Positions 211 and 232 each coordinate a divalent metal cation. Substrate is bound by residues 235–236, R243, and 269–272; these read NA and DGTH. The active-site Proton donor/acceptor is the D294. Residue 328 to 330 coordinates substrate; the sequence is LSG.

This sequence belongs to the metallo-dependent hydrolases superfamily. NagA family. The cofactor is a divalent metal cation.

The enzyme catalyses N-acetyl-D-glucosamine 6-phosphate + H2O = D-glucosamine 6-phosphate + acetate. Its pathway is amino-sugar metabolism; N-acetylneuraminate degradation. In terms of biological role, hydrolyzes the N-glycolyl group from N-glycolylglucosamine 6-phosphate (GlcNGc-6-P) in the N-glycolylneuraminic acid (Neu5Gc) degradation pathway. Although human is not able to catalyze formation of Neu5Gc due to the inactive CMAHP enzyme, Neu5Gc is present in food and must be degraded. In Homo sapiens (Human), this protein is N-acetylglucosamine-6-phosphate deacetylase (AMDHD2).